A 627-amino-acid polypeptide reads, in one-letter code: Ras and EF-hand domain-containing protein homolog (627 aa).

Residues 55-245 (YERVIRNFLR…RKLHDSNDGL (191 aa)) are a coiled coil. Phosphoserine occurs at positions 266 and 272. GTP-binding positions include 438–443 (AVGKSS), 541–544 (NKAD), and 578–579 (AK).

This sequence belongs to the small GTPase superfamily. Rab family. Homodimer. Interacts with the dynein-dynactin complex.

The protein resides in the cytoplasm. The protein localises to the perinuclear region. In terms of biological role, binds predominantly GDP, and also GTP. Acts as a dynein adapter protein that activates dynein-mediated transport and dynein-dynactin motility on microtubules. In Mus musculus (Mouse), this protein is Ras and EF-hand domain-containing protein homolog (Rasef).